The following is a 252-amino-acid chain: Triosephosphate isomerase (252 aa).

Residue 10–12 coordinates substrate; the sequence is NWK. H96 acts as the Electrophile in catalysis. E168 (proton acceptor) is an active-site residue. Substrate is bound by residues G174, S214, and 235 to 236; that span reads GG.

This sequence belongs to the triosephosphate isomerase family. Homodimer.

It localises to the cytoplasm. It carries out the reaction D-glyceraldehyde 3-phosphate = dihydroxyacetone phosphate. It participates in carbohydrate biosynthesis; gluconeogenesis. It functions in the pathway carbohydrate degradation; glycolysis; D-glyceraldehyde 3-phosphate from glycerone phosphate: step 1/1. In terms of biological role, involved in the gluconeogenesis. Catalyzes stereospecifically the conversion of dihydroxyacetone phosphate (DHAP) to D-glyceraldehyde-3-phosphate (G3P). The chain is Triosephosphate isomerase from Streptococcus agalactiae serotype Ia (strain ATCC 27591 / A909 / CDC SS700).